We begin with the raw amino-acid sequence, 565 residues long: Arginine--tRNA ligase (565 aa).

The short motif at 128-138 is the 'HIGH' region element; it reads ANPTGPLHVGH.

It belongs to the class-I aminoacyl-tRNA synthetase family. As to quaternary structure, monomer.

The protein resides in the cytoplasm. The catalysed reaction is tRNA(Arg) + L-arginine + ATP = L-arginyl-tRNA(Arg) + AMP + diphosphate. The polypeptide is Arginine--tRNA ligase (Albidiferax ferrireducens (strain ATCC BAA-621 / DSM 15236 / T118) (Rhodoferax ferrireducens)).